The chain runs to 354 residues: Probable serine acetyltransferase 2 (354 aa).

The protein belongs to the transferase hexapeptide repeat family. In terms of assembly, homomultimer.

The enzyme catalyses L-serine + acetyl-CoA = O-acetyl-L-serine + CoA. It participates in amino-acid biosynthesis; L-cysteine biosynthesis; L-cysteine from L-serine: step 1/2. In Oryza sativa subsp. japonica (Rice), this protein is Probable serine acetyltransferase 2 (SAT2).